The primary structure comprises 47 residues: Delta-actitoxin-Ael1b (47 aa).

3 cysteine pairs are disulfide-bonded: cysteine 4–cysteine 44, cysteine 6–cysteine 34, and cysteine 27–cysteine 45.

The protein belongs to the sea anemone sodium channel inhibitory toxin family. Type I subfamily.

It localises to the secreted. Its subcellular location is the nematocyst. Functionally, produces a positive inotropic effect in mammalian heart muscle. Modifies current passing through the fast sodium channel (Nav) in neuroblastoma cells, leading to delayed and incomplete inactivation. Paralyzes the shore crab (C.maenas) by tetanic contractions after intramuscular injection. The chain is Delta-actitoxin-Ael1b from Anthopleura elegantissima (Green aggregating anemone).